The chain runs to 447 residues: Ribulose bisphosphate carboxylase large chain (447 aa).

Substrate-binding residues include Asn89 and Thr139. Lys141 serves as the catalytic Proton acceptor. Lys143 provides a ligand contact to substrate. Mg(2+) contacts are provided by Lys167, Asp169, and Glu170. Lys167 bears the N6-carboxylysine mark. His260 acts as the Proton acceptor in catalysis. 3 residues coordinate substrate: Arg261, His293, and Ser345.

Belongs to the RuBisCO large chain family. Type I subfamily. As to quaternary structure, heterohexadecamer of 8 large chains and 8 small chains; disulfide-linked. The disulfide link is formed within the large subunit homodimers. Mg(2+) serves as cofactor. The disulfide bond which can form in the large chain dimeric partners within the hexadecamer appears to be associated with oxidative stress and protein turnover.

Its subcellular location is the plastid. It is found in the chloroplast. The catalysed reaction is 2 (2R)-3-phosphoglycerate + 2 H(+) = D-ribulose 1,5-bisphosphate + CO2 + H2O. The enzyme catalyses D-ribulose 1,5-bisphosphate + O2 = 2-phosphoglycolate + (2R)-3-phosphoglycerate + 2 H(+). RuBisCO catalyzes two reactions: the carboxylation of D-ribulose 1,5-bisphosphate, the primary event in carbon dioxide fixation, as well as the oxidative fragmentation of the pentose substrate in the photorespiration process. Both reactions occur simultaneously and in competition at the same active site. This chain is Ribulose bisphosphate carboxylase large chain, found in Ligustrum vulgare (Common privet).